Here is a 72-residue protein sequence, read N- to C-terminus: MAVFKVFFQHNKDEVIVRENTNTIYVEGETEEQVRRYLKDRNYNIEFITKLEGAHLEYEKEHSDHFNVENAQ.

The protein belongs to the RNA polymerase subunit epsilon family. In terms of assembly, RNAP is composed of a core of 2 alpha, a beta and a beta' subunit. The core is associated with a delta subunit, and at least one of epsilon or omega. When a sigma factor is associated with the core the holoenzyme is formed, which can initiate transcription.

The catalysed reaction is RNA(n) + a ribonucleoside 5'-triphosphate = RNA(n+1) + diphosphate. In terms of biological role, a non-essential component of RNA polymerase (RNAP). The chain is DNA-directed RNA polymerase subunit epsilon from Staphylococcus haemolyticus (strain JCSC1435).